Here is a 504-residue protein sequence, read N- to C-terminus: Glucose-6-phosphate isomerase (504 aa).

Glu-333 (proton donor) is an active-site residue. Catalysis depends on residues His-364 and Lys-473.

The protein belongs to the GPI family.

The protein resides in the cytoplasm. The catalysed reaction is alpha-D-glucose 6-phosphate = beta-D-fructose 6-phosphate. It functions in the pathway carbohydrate biosynthesis; gluconeogenesis. It participates in carbohydrate degradation; glycolysis; D-glyceraldehyde 3-phosphate and glycerone phosphate from D-glucose: step 2/4. In terms of biological role, catalyzes the reversible isomerization of glucose-6-phosphate to fructose-6-phosphate. The protein is Glucose-6-phosphate isomerase of Stenotrophomonas maltophilia (strain R551-3).